Reading from the N-terminus, the 97-residue chain is ORF9b protein (97 aa).

The 9b domain occupies 8–97 (MHPALRLVDP…PDEFVVVTVK (90 aa)). The Nuclear export signal motif lies at 45–53 (ILRLGSPLS).

It belongs to the coronavirus group 2 protein 9b family. Homodimer. Interacts with host TOMM70; the interaction occurs only with monomer.

Its subcellular location is the host cytoplasm. It localises to the host mitochondrion. Plays a role in inhibiting the host innate immune response by targeting the mitochondrial-associated innate immune response. Acts by binding to host TOMM70, inhibiting its binding to HSP90AB1 thereby disrupting the interferon activation pathway. The sequence is that of ORF9b protein from Homo sapiens (Human).